Reading from the N-terminus, the 365-residue chain is uncharacterized protein (365 aa).

This sequence belongs to the NAD(P)-dependent epimerase/dehydratase family.

It is found in the cytoplasm. The protein localises to the nucleus. This is an uncharacterized protein from Schizosaccharomyces pombe (strain 972 / ATCC 24843) (Fission yeast).